Here is a 1067-residue protein sequence, read N- to C-terminus: Chitinase-like protein C25A8.4 (1067 aa).

A signal peptide spans M1–C18. GH18 domains are found at residues P26–T364, C372–Q727, and F743–R1067. C30 and C51 form a disulfide bridge. 2 N-linked (GlcNAc...) asparagine glycosylation sites follow: N47 and N216. C376 and C397 are joined by a disulfide. N-linked (GlcNAc...) asparagine glycans are attached at residues N475, N538, and N710. A disulfide bond links C747 and C768. 2 N-linked (GlcNAc...) asparagine glycosylation sites follow: N797 and N830. Catalysis depends on E855, which acts as the Proton donor. N-linked (GlcNAc...) asparagine glycans are attached at residues N887, N933, and N1010.

This sequence belongs to the glycosyl hydrolase 18 family.

The protein resides in the secreted. Functionally, putative chitinase. The protein is Chitinase-like protein C25A8.4 (cht-3) of Caenorhabditis elegans.